Reading from the N-terminus, the 403-residue chain is RILP-like protein 1 (403 aa).

A Phosphoserine modification is found at Ser7. Positions 10-97 constitute an RH1 domain; that stretch reads AAESALEKNV…RLERMDRIEK (88 aa). Residue Cys47 is modified to S-nitrosocysteine. A coiled-coil region spans residues 76–258; that stretch reads ELDELRLELD…KLRERLQGEH (183 aa). 3 disordered regions span residues 254 to 275, 327 to 352, and 384 to 403; these read LQGE…GEES, EMEE…PESG, and ANTH…LQHL. Ser259 is subject to Phosphoserine. The segment covering 262-275 has biased composition (acidic residues); it reads GEEEPETEPVGEES. Residues 291–356 enclose the RH2 domain; that stretch reads RPRFTLQELR…PQPESGIKRL (66 aa). Over residues 394-403 the composition is skewed to polar residues; the sequence is EQGQEALQHL.

The protein belongs to the RILPL family. Interacts (when S-nitrosylated) with GAPDH. Interacts with RAB8A; interaction is dependent on the phosphorylation of 'Thr-72' of RAB8A. Interacts with RAB10 and RAB12; the interaction is dependent on the phosphorylation of 'Thr-73' of RAB10, and 'Ser-105' of RAB12. In terms of processing, S-nitrosylation is required for the interaction with GAPDH. In terms of tissue distribution, widely expressed. Expressed at lower level in liver and kidney.

The protein localises to the cytoplasm. Its subcellular location is the cytosol. It localises to the cytoskeleton. It is found in the microtubule organizing center. The protein resides in the centrosome. The protein localises to the centriole. Its subcellular location is the cilium basal body. Its function is as follows. Plays a role in the regulation of cell shape and polarity. Plays a role in cellular protein transport, including protein transport away from primary cilia. Neuroprotective protein, which acts by sequestring GAPDH in the cytosol and prevent the apoptotic function of GAPDH in the nucleus. Competes with SIAH1 for binding GAPDH. Does not regulate lysosomal morphology and distribution. Binds to RAB10 following LRRK2-mediated RAB10 phosphorylation which leads to inhibition of ciliogenesis. The polypeptide is RILP-like protein 1 (RILPL1) (Homo sapiens (Human)).